The sequence spans 282 residues: MFQTTPKQVKPTTVPKTGRKNADVAHEHFTNGTQKLEEALLKFEAILKPKEKDQSIQEFRKQVRAVCKDAKDAKKFLEKYKNIRYRPKRTRESHNTGLEKPRMISEAMATFADWEYGKTEKSRYDVTKYLCAYIKDNDLRDASNKTIILPDAKLKKLLQVDDSVVLKYPTMQKYLKHCFDEVVARAPSPTTELGAAELTDDQTTAEEAPKEVKKSRKPKEVAVPQPPPEEEEVAPVEQQQQSVESEEEELQLPPPKPKKSTGKKDKENIPLEKVKKEHKIKK.

Positions 1-16 are enriched in low complexity; that stretch reads MFQTTPKQVKPTTVPK. The segment at 1-21 is disordered; that stretch reads MFQTTPKQVKPTTVPKTGRKN. The 85-residue stretch at 97–181 folds into the SWIB/MDM2 domain; sequence GLEKPRMISE…QKYLKHCFDE (85 aa). A disordered region spans residues 199–282; sequence TDDQTTAEEA…KVKKEHKIKK (84 aa). Residues 262 to 275 show a composition bias toward basic and acidic residues; that stretch reads GKKDKENIPLEKVK.

It belongs to the IIV-6 306R family.

The protein is Putative SWIB domain-containing protein 070L of Invertebrate iridescent virus 3 (IIV-3).